The following is a 224-amino-acid chain: MKDVKRIDYFSYEELTILGGSKLPLVNFELFDPSNFEEAKAALIEKELVTENDKLTDAGFKVATLVREYISAIVNIRINDMYFAPFSYEKDEYILLSRFKNNGFQIRIINKDIAWWSIVQSYPLLMRQEKSNDWDFKQIDDETLENLNNESIDTIGRVLEIEIYNHQGDPQQSLYNIYEQNDLLFIRYPLKDKVLNVHIGVINTFIRELFGFDTDENHINKAEE.

As to quaternary structure, interacts with EssD.

In terms of biological role, component of the type VII secretion system (Ess). Plays a role in Esx protein secretion. Plays an essential role in the processing and secretion of EssD. The sequence is that of Type VII secretion system protein EsaE from Staphylococcus aureus (strain USA300).